Reading from the N-terminus, the 140-residue chain is Histone H2B (140 aa).

A compositionally biased stretch (basic and acidic residues) spans 1–10 (MPPKAAEKKP). A disordered region spans residues 1–48 (MPPKAAEKKPTTGGKAPAGKAPAEKKEAGKKTAAAASGDKKKRGKTRK). 2 positions are modified to N6-acetyllysine; alternate: lysine 8 and lysine 9. Glycyl lysine isopeptide (Lys-Gly) (interchain with G-Cter in SUMO); alternate cross-links involve residues lysine 8 and lysine 9. Residues 11-21 (TTGGKAPAGKA) are compositionally biased toward low complexity. Lysine 15 bears the N6-acetyllysine mark. Residue lysine 25 is modified to N6-acetyllysine; alternate. Residue lysine 25 forms a Glycyl lysine isopeptide (Lys-Gly) (interchain with G-Cter in SUMO); alternate linkage. A Glycyl lysine isopeptide (Lys-Gly) (interchain with G-Cter in SUMO) cross-link involves residue lysine 26. Lysine 134 is covalently cross-linked (Glycyl lysine isopeptide (Lys-Gly) (interchain with G-Cter in ubiquitin)).

The protein belongs to the histone H2B family. The nucleosome is a histone octamer containing two molecules each of H2A, H2B, H3 and H4 assembled in one H3-H4 heterotetramer and two H2A-H2B heterodimers. The octamer wraps approximately 147 bp of DNA. Monoubiquitinated by the ubc2-bre1 complex to form H2BK123ub1. H2BK123ub1 gives a specific tag for epigenetic transcriptional activation and is also prerequisite for H3K4me and H3K79me formation. H2BK123ub1 also modulates the formation of double-strand breaks during meiosis and is a prerequisite for DNA-damage checkpoint activation. In terms of processing, acetylated by gcn5 to form H2BK11ac and H2BK16ac. H2BK16ac can also be formed by esa1. Acetylation of N-terminal lysines and particularly formation of H2BK11acK16ac has a positive effect on transcription. Post-translationally, sumoylation to form H2BK6su or H2BK7su, and probably also H2BK16su or H2BK17su, occurs preferentially near the telomeres and represses gene transcription.

It is found in the nucleus. Its subcellular location is the chromosome. Its function is as follows. Core component of nucleosome. Nucleosomes wrap and compact DNA into chromatin, limiting DNA accessibility to the cellular machineries which require DNA as a template. Histones thereby play a central role in transcription regulation, DNA repair, DNA replication and chromosomal stability. DNA accessibility is regulated via a complex set of post-translational modifications of histones, also called histone code, and nucleosome remodeling. This chain is Histone H2B (htb1), found in Aspergillus terreus (strain NIH 2624 / FGSC A1156).